The primary structure comprises 197 residues: Holliday junction branch migration complex subunit RuvA (197 aa).

The segment at 1–62 (MIEFVRGEVA…EDQEVLFGFR (62 aa)) is domain I. The tract at residues 63–141 (SRRERALFTK…ELAPDYIPSE (79 aa)) is domain II. Residues 141–145 (EGLFA) are flexible linker. Residues 146–197 (QGNAELNEACEALTALGYSEREVEKVKKALQGEVLSTDQYVKRALQLLLNVR) are domain III.

The protein belongs to the RuvA family. In terms of assembly, homotetramer. Forms an RuvA(8)-RuvB(12)-Holliday junction (HJ) complex. HJ DNA is sandwiched between 2 RuvA tetramers; dsDNA enters through RuvA and exits via RuvB. An RuvB hexamer assembles on each DNA strand where it exits the tetramer. Each RuvB hexamer is contacted by two RuvA subunits (via domain III) on 2 adjacent RuvB subunits; this complex drives branch migration. In the full resolvosome a probable DNA-RuvA(4)-RuvB(12)-RuvC(2) complex forms which resolves the HJ.

The protein resides in the cytoplasm. Functionally, the RuvA-RuvB-RuvC complex processes Holliday junction (HJ) DNA during genetic recombination and DNA repair, while the RuvA-RuvB complex plays an important role in the rescue of blocked DNA replication forks via replication fork reversal (RFR). RuvA specifically binds to HJ cruciform DNA, conferring on it an open structure. The RuvB hexamer acts as an ATP-dependent pump, pulling dsDNA into and through the RuvAB complex. HJ branch migration allows RuvC to scan DNA until it finds its consensus sequence, where it cleaves and resolves the cruciform DNA. This Exiguobacterium sibiricum (strain DSM 17290 / CCUG 55495 / CIP 109462 / JCM 13490 / 255-15) protein is Holliday junction branch migration complex subunit RuvA.